We begin with the raw amino-acid sequence, 165 residues long: Basic leucine zipper 43 (165 aa).

Residues 70–133 (NERKQKRKIS…EKVIEENVQL (64 aa)) enclose the bZIP domain. The segment at 72 to 93 (RKQKRKISNRESARRSRMRKQR) is basic motif. The tract at residues 98–112 (LWSQVMWLRDENHQL) is leucine-zipper.

Forms heterodimers with BZIP34 and BZIP61.

It localises to the nucleus. Functionally, probable transcription factor involved in somatic embryogenesis. Acts as a positive regulator of BHLH109. The sequence is that of Basic leucine zipper 43 from Arabidopsis thaliana (Mouse-ear cress).